A 427-amino-acid polypeptide reads, in one-letter code: Isocitrate lyase (427 aa).

Serine 89–tryptophan 91 serves as a coordination point for substrate. Aspartate 150 lines the Mg(2+) pocket. The Proton acceptor role is filled by cysteine 188. Substrate is bound by residues glycine 189–histidine 190, arginine 225, asparagine 310–serine 314, and threonine 344.

It belongs to the isocitrate lyase/PEP mutase superfamily. Isocitrate lyase family. In terms of assembly, homotetramer. It depends on Mg(2+) as a cofactor.

The enzyme catalyses D-threo-isocitrate = glyoxylate + succinate. It participates in carbohydrate metabolism; glyoxylate cycle; (S)-malate from isocitrate: step 1/2. Involved in the metabolic adaptation in response to environmental changes. Catalyzes the reversible formation of succinate and glyoxylate from isocitrate, a key step of the glyoxylate cycle, which operates as an anaplerotic route for replenishing the tricarboxylic acid cycle during growth on fatty acid substrates. The sequence is that of Isocitrate lyase (aceA) from Halalkalibacterium halodurans (strain ATCC BAA-125 / DSM 18197 / FERM 7344 / JCM 9153 / C-125) (Bacillus halodurans).